The following is a 226-amino-acid chain: AA9 family lytic polysaccharide monooxygenase E (226 aa).

An N-terminal signal peptide occupies residues 1-18; that stretch reads MLANGAIVFLAAALGVSG. A Cu(2+)-binding site is contributed by His19. 2 disulfides stabilise this stretch: Cys56/Cys174 and Cys144/Cys226. N-linked (GlcNAc...) asparagine glycosylation occurs at Asn69. His86 is a Cu(2+) binding site. The O2 site is built by His160 and Gln169. Tyr171 contacts Cu(2+).

This sequence belongs to the polysaccharide monooxygenase AA9 family. Cu(2+) is required as a cofactor.

The protein localises to the secreted. It carries out the reaction [(1-&gt;4)-beta-D-glucosyl]n+m + reduced acceptor + O2 = 4-dehydro-beta-D-glucosyl-[(1-&gt;4)-beta-D-glucosyl]n-1 + [(1-&gt;4)-beta-D-glucosyl]m + acceptor + H2O.. In terms of biological role, lytic polysaccharide monooxygenase (LPMO) that depolymerizes crystalline and amorphous polysaccharides via the oxidation of scissile alpha- or beta-(1-4)-glycosidic bonds, yielding C1 and C4 oxidation products. Catalysis by LPMOs requires the reduction of the active-site copper from Cu(II) to Cu(I) by a reducing agent and H(2)O(2) or O(2) as a cosubstrate. Shows endoglucanase activity on tamarind xyloglucan, as well as on beechwood xylan when combined with phosphoric acid swollen cellulose (PASC). Shows no activity on wheat arabinoxylan, konjac glucomannan, acetylated spruce galactoglucomannan, or cellopentaose. In Thermothielavioides terrestris (strain ATCC 38088 / NRRL 8126) (Thielavia terrestris), this protein is AA9 family lytic polysaccharide monooxygenase E.